The sequence spans 102 residues: NADH-quinone oxidoreductase subunit K (102 aa).

3 consecutive transmembrane segments (helical) span residues 6–26 (MEHG…GLMV), 30–50 (ILFV…AFVV), and 62–82 (IMFI…LAIL).

The protein belongs to the complex I subunit 4L family. In terms of assembly, NDH-1 is composed of 13 different subunits. Subunits NuoA, H, J, K, L, M, N constitute the membrane sector of the complex.

The protein localises to the cell inner membrane. The catalysed reaction is a quinone + NADH + 5 H(+)(in) = a quinol + NAD(+) + 4 H(+)(out). Functionally, NDH-1 shuttles electrons from NADH, via FMN and iron-sulfur (Fe-S) centers, to quinones in the respiratory chain. The immediate electron acceptor for the enzyme in this species is believed to be ubiquinone. Couples the redox reaction to proton translocation (for every two electrons transferred, four hydrogen ions are translocated across the cytoplasmic membrane), and thus conserves the redox energy in a proton gradient. This chain is NADH-quinone oxidoreductase subunit K, found in Azotobacter vinelandii (strain DJ / ATCC BAA-1303).